The chain runs to 149 residues: Putative pre-16S rRNA nuclease (149 aa).

Belongs to the YqgF nuclease family.

Its subcellular location is the cytoplasm. Functionally, could be a nuclease involved in processing of the 5'-end of pre-16S rRNA. This Synechococcus sp. (strain ATCC 27144 / PCC 6301 / SAUG 1402/1) (Anacystis nidulans) protein is Putative pre-16S rRNA nuclease.